A 63-amino-acid chain; its full sequence is Cecropin-A1 (63 aa).

An N-terminal signal peptide occupies residues 1 to 23; sequence MNFYNIFVFVALILAITIGQSEA. Arg-62 carries the arginine amide modification.

This sequence belongs to the cecropin family.

It localises to the secreted. Functionally, cecropins have lytic and antibacterial activity against several Gram-positive and Gram-negative bacteria. In Drosophila sechellia (Fruit fly), this protein is Cecropin-A1 (CecA1).